Reading from the N-terminus, the 202-residue chain is UPF0056 membrane protein PH0214 (202 aa).

6 helical membrane passes run 5–25 (ILSSALLMLIMIDPSDKILLV), 47–67 (IGFILLLLFAVAGKIILQDIF), 76–96 (VAGGFVLFKIGLEALEGGGMV), 104–124 (ILALAAVPVATPLIAGPAAIT), 135–155 (IIVSIVGTLIAIAITAALMMI), and 174–194 (IIGLFIMAIGAQMMITGAGGI).

It belongs to the UPF0056 (MarC) family.

Its subcellular location is the cell membrane. This chain is UPF0056 membrane protein PH0214, found in Pyrococcus horikoshii (strain ATCC 700860 / DSM 12428 / JCM 9974 / NBRC 100139 / OT-3).